The following is a 171-amino-acid chain: Adenine phosphoribosyltransferase (171 aa).

It belongs to the purine/pyrimidine phosphoribosyltransferase family. In terms of assembly, homodimer.

The protein localises to the cytoplasm. The catalysed reaction is AMP + diphosphate = 5-phospho-alpha-D-ribose 1-diphosphate + adenine. It functions in the pathway purine metabolism; AMP biosynthesis via salvage pathway; AMP from adenine: step 1/1. In terms of biological role, catalyzes a salvage reaction resulting in the formation of AMP, that is energically less costly than de novo synthesis. This chain is Adenine phosphoribosyltransferase, found in Solidesulfovibrio magneticus (strain ATCC 700980 / DSM 13731 / RS-1) (Desulfovibrio magneticus).